The following is a 426-amino-acid chain: Enolase (426 aa).

Gln-162 contributes to the (2R)-2-phosphoglycerate binding site. The active-site Proton donor is Glu-204. Mg(2+) is bound by residues Asp-241, Glu-284, and Asp-311. The (2R)-2-phosphoglycerate site is built by Lys-336, Arg-365, Ser-366, and Lys-387. Lys-336 acts as the Proton acceptor in catalysis.

The protein belongs to the enolase family. Requires Mg(2+) as cofactor.

It localises to the cytoplasm. The protein localises to the secreted. Its subcellular location is the cell surface. The catalysed reaction is (2R)-2-phosphoglycerate = phosphoenolpyruvate + H2O. It participates in carbohydrate degradation; glycolysis; pyruvate from D-glyceraldehyde 3-phosphate: step 4/5. In terms of biological role, catalyzes the reversible conversion of 2-phosphoglycerate (2-PG) into phosphoenolpyruvate (PEP). It is essential for the degradation of carbohydrates via glycolysis. This Acidithiobacillus ferrooxidans (strain ATCC 23270 / DSM 14882 / CIP 104768 / NCIMB 8455) (Ferrobacillus ferrooxidans (strain ATCC 23270)) protein is Enolase.